The chain runs to 146 residues: Extracellular globin-2A (146 aa).

Residues His-4–Asp-146 enclose the Globin domain. Cys-5 and Cys-134 form a disulfide bridge. His-97 contacts heme b.

The protein belongs to the globin family. In terms of assembly, disulfide bonded trimer of chains IIA, IIB, and IIC.

In Tylorrhynchus heterochetus (Japanese palolo worm), this protein is Extracellular globin-2A.